The chain runs to 1129 residues: Kinesin-like protein KIP1 (1129 aa).

Residues 1 to 49 (MLEQAEKLMKRNSSGAMSAPQSKPLARSRSSTMPTTTQKRVRSSQQSEG) form a disordered region. 2 stretches are compositionally biased toward polar residues: residues 11 to 21 (RNSSGAMSAPQ) and 28 to 48 (SRSSTMPTTTQKRVRSSQQSE). Positions 54–417 (NIKVYVRCRS…LEYATRAKSI (364 aa)) constitute a Kinesin motor domain. 139–146 (GQTGTGKT) serves as a coordination point for ATP. 3 coiled-coil regions span residues 422–513 (QVNQ…ELDV), 681–765 (LEKE…QKIV), and 919–948 (DDQRRELRSVINNTNNHADRLRSEIGTLVN).

Belongs to the TRAFAC class myosin-kinesin ATPase superfamily. Kinesin family. BimC subfamily.

It localises to the cytoplasm. Its subcellular location is the cytoskeleton. The protein resides in the spindle. In terms of biological role, required for assembly of the mitotic spindle. Interacts with spindle microtubules to produce an outwardly directed force acting upon the poles. Following spindle assembly, CIN8 and KIP1 apparently act to oppose a force that draws separated poles back together. This force seems to be mediate by KAR3. The protein is Kinesin-like protein KIP1 (KIP1) of Eremothecium gossypii (strain ATCC 10895 / CBS 109.51 / FGSC 9923 / NRRL Y-1056) (Yeast).